A 249-amino-acid polypeptide reads, in one-letter code: General transcription factor IIF subunit 2 (249 aa).

The residue at position 2 (Ala2) is an N-acetylalanine. Lys22, Lys33, and Lys137 each carry N6-acetyllysine. Phosphoserine is present on Ser142. The DNA site is built by Gly227 and His229. Ser248 is modified (phosphoserine).

It belongs to the TFIIF beta subunit family. As to quaternary structure, heterodimer of an alpha and a beta subunit. Interacts with HTATSF1 and URI1. Interacts with GPBP1. Interacts with GTF2B (via N-terminus); this interaction is inhibited in presence of GTF2F1. Part of TBP-based Pol II pre-initiation complex (PIC), in which Pol II core assembles with general transcription factors and other specific initiation factors including GTF2E1, GTF2E2, GTF2F1, GTF2F2, TCEA1, ERCC2, ERCC3, GTF2H2, GTF2H3, GTF2H4, GTF2H5, GTF2A1, GTF2A2, GTF2B and TBP; this large multi-subunit PIC complex mediates DNA unwinding and targets Pol II core to the transcription start site where the first phosphodiester bond forms.

Its subcellular location is the nucleus. Functionally, TFIIF is a general transcription initiation factor that binds to RNA polymerase II and helps to recruit it to the initiation complex in collaboration with TFIIB. The sequence is that of General transcription factor IIF subunit 2 (Gtf2f2) from Mus musculus (Mouse).